The following is a 191-amino-acid chain: MKDEHNQEHDHLSPKEPESYQKAYACKEQQGEEKQEASEKEGEIKEDFELKYQEMREQYLRVHADFENVKKRLERDKSMALEYAYEKIALDLLPVIDALLGAHKSAVEVDKESALTKGLELTMEKLHEVLARHGIEGIECLEEFDPNFHNAIMQVKSEEKENGKIVQVLQQGYKYKGRVLRPAMVSIAKND.

Composition is skewed to basic and acidic residues over residues 1–19 (MKDEHNQEHDHLSPKEPES) and 29–45 (QQGEEKQEASEKEGEIK). The segment at 1-45 (MKDEHNQEHDHLSPKEPESYQKAYACKEQQGEEKQEASEKEGEIK) is disordered.

Belongs to the GrpE family. In terms of assembly, homodimer.

Its subcellular location is the cytoplasm. Functionally, participates actively in the response to hyperosmotic and heat shock by preventing the aggregation of stress-denatured proteins, in association with DnaK and GrpE. It is the nucleotide exchange factor for DnaK and may function as a thermosensor. Unfolded proteins bind initially to DnaJ; upon interaction with the DnaJ-bound protein, DnaK hydrolyzes its bound ATP, resulting in the formation of a stable complex. GrpE releases ADP from DnaK; ATP binding to DnaK triggers the release of the substrate protein, thus completing the reaction cycle. Several rounds of ATP-dependent interactions between DnaJ, DnaK and GrpE are required for fully efficient folding. The protein is Protein GrpE of Helicobacter pylori (strain J99 / ATCC 700824) (Campylobacter pylori J99).